Consider the following 334-residue polypeptide: Probable GTP 3',8-cyclase (334 aa).

The 233-residue stretch at 24–256 folds into the Radical SAM core domain; the sequence is PYGRKVTGLR…RKKYMIDGVE (233 aa). Arg-33 is a binding site for GTP. Positions 40 and 44 each coordinate [4Fe-4S] cluster. Position 46 (Tyr-46) interacts with S-adenosyl-L-methionine. Residue Cys-47 coordinates [4Fe-4S] cluster. Lys-85 contacts GTP. S-adenosyl-L-methionine is bound at residue Gly-89. Thr-113 serves as a coordination point for GTP. Residue Ser-137 participates in S-adenosyl-L-methionine binding. GTP is bound at residue Lys-176. Positions 269 and 272 each coordinate [4Fe-4S] cluster. 274 to 276 is a binding site for GTP; it reads RLR. Cys-286 lines the [4Fe-4S] cluster pocket.

The protein belongs to the radical SAM superfamily. MoaA family. The cofactor is [4Fe-4S] cluster.

The catalysed reaction is GTP + AH2 + S-adenosyl-L-methionine = (8S)-3',8-cyclo-7,8-dihydroguanosine 5'-triphosphate + 5'-deoxyadenosine + L-methionine + A + H(+). Its pathway is cofactor biosynthesis; molybdopterin biosynthesis. Functionally, catalyzes the cyclization of GTP to (8S)-3',8-cyclo-7,8-dihydroguanosine 5'-triphosphate. The protein is Probable GTP 3',8-cyclase of Methanosarcina mazei (strain ATCC BAA-159 / DSM 3647 / Goe1 / Go1 / JCM 11833 / OCM 88) (Methanosarcina frisia).